Here is a 198-residue protein sequence, read N- to C-terminus: Recombination protein RecR (198 aa).

The C4-type zinc finger occupies 57–72; the sequence is CEKCNTFTEAQICEVC. One can recognise a Toprim domain in the interval 80-175; that stretch reads TLLCVVETPA…AVTRLARGVP (96 aa).

The protein belongs to the RecR family.

Its function is as follows. May play a role in DNA repair. It seems to be involved in an RecBC-independent recombinational process of DNA repair. It may act with RecF and RecO. The polypeptide is Recombination protein RecR (Burkholderia vietnamiensis (strain G4 / LMG 22486) (Burkholderia cepacia (strain R1808))).